A 714-amino-acid chain; its full sequence is Fumarate reductase flavoprotein subunit (714 aa).

FAD is bound by residues 13–16, 42–44, and 49–50; these read GGLA, SHS, and GG. A Tele-8alpha-FAD histidine modification is found at His-43. Active-site residues include His-257 and Arg-273. FAD contacts are provided by residues Glu-420 and 436–437; that span reads SV.

The protein belongs to the FAD-dependent oxidoreductase 2 family. FRD/SDH subfamily. In terms of assembly, part of an enzyme complex containing three subunits: a flavoprotein (frdA), an iron-sulfur protein (frdB), and diheme cytochrome b (frdC). The cofactor is FAD.

The protein resides in the cell inner membrane. It catalyses the reaction a quinone + succinate = fumarate + a quinol. In terms of biological role, the fumarate reductase enzyme complex is required for fumarate respiration. This chain is Fumarate reductase flavoprotein subunit (frdA), found in Helicobacter pylori (strain ATCC 700392 / 26695) (Campylobacter pylori).